We begin with the raw amino-acid sequence, 785 residues long: (+)-copalyl diphosphate synthase 3, chloroplastic (785 aa).

K238 contributes to the substrate binding site. Mg(2+)-binding residues include D371 and D373. The DXDD motif motif lies at 371–374; sequence DIDD. Residue K457 participates in substrate binding.

Belongs to the terpene synthase family. Mg(2+) is required as a cofactor. Present in both leaves and flowers, with higher levels in leaves.

It localises to the plastid. The protein localises to the chloroplast. It catalyses the reaction (2E,6E,10E)-geranylgeranyl diphosphate = (+)-copalyl diphosphate. Its pathway is secondary metabolite biosynthesis; terpenoid biosynthesis. Its function is as follows. Involved in the biosynthesis of labdane-type diterpenoid including marrubiin and other labdane-related furanoid diterpenoids with potential applications as anti-diabetics, analgesics or vasorelaxants. Terpene synthase that produces (+)-copalyl diphosphate ((+)-CPP) from geranylgeranyl diphosphate (GGPP). This is (+)-copalyl diphosphate synthase 3, chloroplastic from Marrubium vulgare (White horehound).